A 1184-amino-acid polypeptide reads, in one-letter code: DNA-directed RNA polymerase subunit beta (1184 aa).

The protein belongs to the RNA polymerase beta chain family. As to quaternary structure, the RNAP catalytic core consists of 2 alpha, 1 beta, 1 beta' and 1 omega subunit. When a sigma factor is associated with the core the holoenzyme is formed, which can initiate transcription.

It carries out the reaction RNA(n) + a ribonucleoside 5'-triphosphate = RNA(n+1) + diphosphate. Functionally, DNA-dependent RNA polymerase catalyzes the transcription of DNA into RNA using the four ribonucleoside triphosphates as substrates. This Fusobacterium nucleatum subsp. nucleatum (strain ATCC 25586 / DSM 15643 / BCRC 10681 / CIP 101130 / JCM 8532 / KCTC 2640 / LMG 13131 / VPI 4355) protein is DNA-directed RNA polymerase subunit beta.